We begin with the raw amino-acid sequence, 489 residues long: Para-nitrobenzyl esterase (489 aa).

The active-site Acyl-ester intermediate is S189. S189 carries the phosphoserine modification. Residues E310 and H399 each act as charge relay system in the active site.

It belongs to the type-B carboxylesterase/lipase family. In terms of assembly, monomer.

In terms of biological role, catalyzes hydrolysis of several beta-lactam antibiotic PNB esters to the corresponding free acid and PNB alcohol. In Bacillus subtilis (strain 168), this protein is Para-nitrobenzyl esterase (pnbA).